Consider the following 341-residue polypeptide: Nicotinate-nucleotide--dimethylbenzimidazole phosphoribosyltransferase (341 aa).

The active-site Proton acceptor is E310.

It belongs to the CobT family.

It carries out the reaction 5,6-dimethylbenzimidazole + nicotinate beta-D-ribonucleotide = alpha-ribazole 5'-phosphate + nicotinate + H(+). It functions in the pathway nucleoside biosynthesis; alpha-ribazole biosynthesis; alpha-ribazole from 5,6-dimethylbenzimidazole: step 1/2. Catalyzes the synthesis of alpha-ribazole-5'-phosphate from nicotinate mononucleotide (NAMN) and 5,6-dimethylbenzimidazole (DMB). The sequence is that of Nicotinate-nucleotide--dimethylbenzimidazole phosphoribosyltransferase from Vibrio cholerae serotype O1 (strain ATCC 39315 / El Tor Inaba N16961).